Reading from the N-terminus, the 635-residue chain is 1-deoxy-D-xylulose-5-phosphate synthase (635 aa).

Thiamine diphosphate is bound by residues His79 and Gly120–Ser122. Asp151 lines the Mg(2+) pocket. Thiamine diphosphate contacts are provided by residues Gly152–Ala153, Asn182, Tyr291, and Glu372. Asn182 lines the Mg(2+) pocket.

This sequence belongs to the transketolase family. DXPS subfamily. Homodimer. Requires Mg(2+) as cofactor. Thiamine diphosphate serves as cofactor.

The catalysed reaction is D-glyceraldehyde 3-phosphate + pyruvate + H(+) = 1-deoxy-D-xylulose 5-phosphate + CO2. It participates in metabolic intermediate biosynthesis; 1-deoxy-D-xylulose 5-phosphate biosynthesis; 1-deoxy-D-xylulose 5-phosphate from D-glyceraldehyde 3-phosphate and pyruvate: step 1/1. Catalyzes the acyloin condensation reaction between C atoms 2 and 3 of pyruvate and glyceraldehyde 3-phosphate to yield 1-deoxy-D-xylulose-5-phosphate (DXP). This Xylella fastidiosa (strain M23) protein is 1-deoxy-D-xylulose-5-phosphate synthase.